A 203-amino-acid chain; its full sequence is Thymidylate kinase (203 aa).

Residue 10–17 (GMDGAGKS) coordinates ATP.

It belongs to the thymidylate kinase family.

The enzyme catalyses dTMP + ATP = dTDP + ADP. Phosphorylation of dTMP to form dTDP in both de novo and salvage pathways of dTTP synthesis. The chain is Thymidylate kinase from Methylobacillus flagellatus (strain ATCC 51484 / DSM 6875 / VKM B-1610 / KT).